The sequence spans 220 residues: Small ribosomal subunit protein uS3 (220 aa).

The KH type-2 domain occupies Ile38 to Arg106.

It belongs to the universal ribosomal protein uS3 family. Part of the 30S ribosomal subunit. Forms a tight complex with proteins S10 and S14.

Its function is as follows. Binds the lower part of the 30S subunit head. Binds mRNA in the 70S ribosome, positioning it for translation. The sequence is that of Small ribosomal subunit protein uS3 from Myxococcus xanthus (strain DK1622).